The primary structure comprises 63 residues: Hyphancin-3D (63 aa).

Residues 1-22 (MNFSRIIFLVFACFVALASVSA) form the signal peptide. Residues 23–26 (APEP) constitute a propeptide, removed by a dipeptidylpeptidase. Leucine 61 carries the post-translational modification Leucine amide.

Belongs to the cecropin family.

Its subcellular location is the secreted. Its function is as follows. Has antibacterial activity. This Hyphantria cunea (Fall webworm moth) protein is Hyphancin-3D.